We begin with the raw amino-acid sequence, 498 residues long: Glycerol kinase (498 aa).

Thr12 lines the ADP pocket. 3 residues coordinate ATP: Thr12, Thr13, and Ser14. Thr12 contributes to the sn-glycerol 3-phosphate binding site. Arg16 contacts ADP. 3 residues coordinate sn-glycerol 3-phosphate: Arg82, Glu83, and Tyr134. Residues Arg82, Glu83, and Tyr134 each coordinate glycerol. His230 bears the Phosphohistidine; by HPr mark. Asp244 contacts sn-glycerol 3-phosphate. Residues Asp244 and Gln245 each contribute to the glycerol site. ADP-binding residues include Thr266 and Gly309. Residues Thr266, Gly309, Gln313, and Gly410 each contribute to the ATP site. Positions 410 and 414 each coordinate ADP.

Belongs to the FGGY kinase family. Homotetramer and homodimer (in equilibrium). The phosphoenolpyruvate-dependent sugar phosphotransferase system (PTS), including enzyme I, and histidine-containing protein (HPr) are required for the phosphorylation, which leads to the activation of the enzyme.

The catalysed reaction is glycerol + ATP = sn-glycerol 3-phosphate + ADP + H(+). Its pathway is polyol metabolism; glycerol degradation via glycerol kinase pathway; sn-glycerol 3-phosphate from glycerol: step 1/1. Its activity is regulated as follows. Activated by phosphorylation and inhibited by fructose 1,6-bisphosphate (FBP). Key enzyme in the regulation of glycerol uptake and metabolism. Catalyzes the phosphorylation of glycerol to yield sn-glycerol 3-phosphate. The polypeptide is Glycerol kinase (Staphylococcus aureus (strain MRSA252)).